Consider the following 611-residue polypeptide: Dihydroxy-acid dehydratase (611 aa).

Position 81 (Asp-81) interacts with Mg(2+). Residue Cys-122 participates in [2Fe-2S] cluster binding. Asp-123 and Lys-124 together coordinate Mg(2+). Lys-124 bears the N6-carboxylysine mark. Cys-195 contributes to the [2Fe-2S] cluster binding site. Glu-491 provides a ligand contact to Mg(2+). Ser-517 serves as the catalytic Proton acceptor.

The protein belongs to the IlvD/Edd family. In terms of assembly, homodimer. Requires [2Fe-2S] cluster as cofactor. Mg(2+) serves as cofactor.

The catalysed reaction is (2R)-2,3-dihydroxy-3-methylbutanoate = 3-methyl-2-oxobutanoate + H2O. It carries out the reaction (2R,3R)-2,3-dihydroxy-3-methylpentanoate = (S)-3-methyl-2-oxopentanoate + H2O. Its pathway is amino-acid biosynthesis; L-isoleucine biosynthesis; L-isoleucine from 2-oxobutanoate: step 3/4. It functions in the pathway amino-acid biosynthesis; L-valine biosynthesis; L-valine from pyruvate: step 3/4. Functionally, functions in the biosynthesis of branched-chain amino acids. Catalyzes the dehydration of (2R,3R)-2,3-dihydroxy-3-methylpentanoate (2,3-dihydroxy-3-methylvalerate) into 2-oxo-3-methylpentanoate (2-oxo-3-methylvalerate) and of (2R)-2,3-dihydroxy-3-methylbutanoate (2,3-dihydroxyisovalerate) into 2-oxo-3-methylbutanoate (2-oxoisovalerate), the penultimate precursor to L-isoleucine and L-valine, respectively. This Actinobacillus pleuropneumoniae serotype 5b (strain L20) protein is Dihydroxy-acid dehydratase.